Reading from the N-terminus, the 66-residue chain is UPF0337 protein BP1738 (66 aa).

Belongs to the UPF0337 (CsbD) family.

This Bordetella pertussis (strain Tohama I / ATCC BAA-589 / NCTC 13251) protein is UPF0337 protein BP1738.